Consider the following 356-residue polypeptide: Dihydroorotate dehydrogenase (quinone) (356 aa).

FMN contacts are provided by residues 66-70 (AGFDK) and Thr-90. Lys-70 contacts substrate. 115-119 (NRMGF) provides a ligand contact to substrate. The FMN site is built by Asn-143 and Asn-176. A substrate-binding site is contributed by Asn-176. Ser-179 serves as the catalytic Nucleophile. Residue Asn-181 coordinates substrate. The FMN site is built by Lys-212 and Thr-240. Residue 241–242 (NT) coordinates substrate. Residues Gly-266, Gly-295, and 316 to 317 (YT) each bind FMN.

This sequence belongs to the dihydroorotate dehydrogenase family. Type 2 subfamily. Monomer. FMN serves as cofactor.

The protein resides in the cell membrane. It catalyses the reaction (S)-dihydroorotate + a quinone = orotate + a quinol. Its pathway is pyrimidine metabolism; UMP biosynthesis via de novo pathway; orotate from (S)-dihydroorotate (quinone route): step 1/1. Catalyzes the conversion of dihydroorotate to orotate with quinone as electron acceptor. The polypeptide is Dihydroorotate dehydrogenase (quinone) (Rhodococcus erythropolis (strain PR4 / NBRC 100887)).